A 568-amino-acid chain; its full sequence is Mannitol 2-dehydrogenase (568 aa).

109 to 120 (IVHVGVGGFHRA) is a binding site for NAD(+).

This sequence belongs to the mannitol dehydrogenase family. In terms of assembly, monomer.

The catalysed reaction is D-mannitol + NAD(+) = D-fructose + NADH + H(+). Functionally, catalyzes the NAD(H)-dependent interconversion of D-fructose and D-mannitol in the mannitol metabolic pathway. This chain is Mannitol 2-dehydrogenase, found in Phaeosphaeria nodorum (strain SN15 / ATCC MYA-4574 / FGSC 10173) (Glume blotch fungus).